We begin with the raw amino-acid sequence, 813 residues long: UPF0508 protein KLLA0A06237g (813 aa).

Residues 478 to 537 (KKDKSKSQKNSTDSLAKLSDTKSIHPPESAMSSHASTPSSTSKSSKSSKSSSTLSPSTCK) are disordered. Low complexity predominate over residues 506 to 537 (SAMSSHASTPSSTSKSSKSSKSSSTLSPSTCK).

The protein belongs to the UPF0508 family.

This is UPF0508 protein KLLA0A06237g from Kluyveromyces lactis (strain ATCC 8585 / CBS 2359 / DSM 70799 / NBRC 1267 / NRRL Y-1140 / WM37) (Yeast).